The sequence spans 176 residues: ATP-dependent protease subunit HslV (176 aa).

Thr-2 is a catalytic residue. Na(+) is bound by residues Gly-157, Cys-160, and Thr-163.

It belongs to the peptidase T1B family. HslV subfamily. In terms of assembly, a double ring-shaped homohexamer of HslV is capped on each side by a ring-shaped HslU homohexamer. The assembly of the HslU/HslV complex is dependent on binding of ATP.

The protein resides in the cytoplasm. The enzyme catalyses ATP-dependent cleavage of peptide bonds with broad specificity.. Allosterically activated by HslU binding. In terms of biological role, protease subunit of a proteasome-like degradation complex believed to be a general protein degrading machinery. The polypeptide is ATP-dependent protease subunit HslV (Pseudomonas putida (strain ATCC 47054 / DSM 6125 / CFBP 8728 / NCIMB 11950 / KT2440)).